Here is a 451-residue protein sequence, read N- to C-terminus: tRNA modification GTPase MnmE (451 aa).

Residues Arg37, Glu95, and Lys135 each contribute to the (6S)-5-formyl-5,6,7,8-tetrahydrofolate site. The 145-residue stretch at 232-376 (GLSIVIMGPP…LVEAIADFAG (145 aa)) folds into the TrmE-type G domain. A K(+)-binding site is contributed by Asn242. GTP contacts are provided by residues 242–247 (NAGKST), 261–267 (SEIAGTT), and 286–289 (DTAG). A Mg(2+)-binding site is contributed by Ser246. Ser261, Ile263, and Thr266 together coordinate K(+). Thr267 is a binding site for Mg(2+). Lys451 is a binding site for (6S)-5-formyl-5,6,7,8-tetrahydrofolate.

It belongs to the TRAFAC class TrmE-Era-EngA-EngB-Septin-like GTPase superfamily. TrmE GTPase family. As to quaternary structure, homodimer. Heterotetramer of two MnmE and two MnmG subunits. The cofactor is K(+).

It is found in the cytoplasm. In terms of biological role, exhibits a very high intrinsic GTPase hydrolysis rate. Involved in the addition of a carboxymethylaminomethyl (cmnm) group at the wobble position (U34) of certain tRNAs, forming tRNA-cmnm(5)s(2)U34. This is tRNA modification GTPase MnmE from Beijerinckia indica subsp. indica (strain ATCC 9039 / DSM 1715 / NCIMB 8712).